Consider the following 286-residue polypeptide: Phosphatidylserine decarboxylase proenzyme (286 aa).

Residues aspartate 90, histidine 147, and serine 252 each act as charge relay system; for autoendoproteolytic cleavage activity in the active site. The active-site Schiff-base intermediate with substrate; via pyruvic acid; for decarboxylase activity is the serine 252. At serine 252 the chain carries Pyruvic acid (Ser); by autocatalysis.

It belongs to the phosphatidylserine decarboxylase family. PSD-B subfamily. Prokaryotic type I sub-subfamily. As to quaternary structure, heterodimer of a large membrane-associated beta subunit and a small pyruvoyl-containing alpha subunit. The cofactor is pyruvate. Is synthesized initially as an inactive proenzyme. Formation of the active enzyme involves a self-maturation process in which the active site pyruvoyl group is generated from an internal serine residue via an autocatalytic post-translational modification. Two non-identical subunits are generated from the proenzyme in this reaction, and the pyruvate is formed at the N-terminus of the alpha chain, which is derived from the carboxyl end of the proenzyme. The autoendoproteolytic cleavage occurs by a canonical serine protease mechanism, in which the side chain hydroxyl group of the serine supplies its oxygen atom to form the C-terminus of the beta chain, while the remainder of the serine residue undergoes an oxidative deamination to produce ammonia and the pyruvoyl prosthetic group on the alpha chain. During this reaction, the Ser that is part of the protease active site of the proenzyme becomes the pyruvoyl prosthetic group, which constitutes an essential element of the active site of the mature decarboxylase.

The protein resides in the cell membrane. It catalyses the reaction a 1,2-diacyl-sn-glycero-3-phospho-L-serine + H(+) = a 1,2-diacyl-sn-glycero-3-phosphoethanolamine + CO2. The protein operates within phospholipid metabolism; phosphatidylethanolamine biosynthesis; phosphatidylethanolamine from CDP-diacylglycerol: step 2/2. Functionally, catalyzes the formation of phosphatidylethanolamine (PtdEtn) from phosphatidylserine (PtdSer). The polypeptide is Phosphatidylserine decarboxylase proenzyme (Pseudomonas fluorescens (strain Pf0-1)).